The primary structure comprises 230 residues: Demethylmenaquinone methyltransferase (230 aa).

S-adenosyl-L-methionine is bound by residues Thr-57, Asp-77, and Asp-101–Ile-102.

The protein belongs to the class I-like SAM-binding methyltransferase superfamily. MenG/UbiE family.

The enzyme catalyses a 2-demethylmenaquinol + S-adenosyl-L-methionine = a menaquinol + S-adenosyl-L-homocysteine + H(+). Its pathway is quinol/quinone metabolism; menaquinone biosynthesis; menaquinol from 1,4-dihydroxy-2-naphthoate: step 2/2. In terms of biological role, methyltransferase required for the conversion of demethylmenaquinol (DMKH2) to menaquinol (MKH2). The polypeptide is Demethylmenaquinone methyltransferase (Chlamydia pneumoniae (Chlamydophila pneumoniae)).